We begin with the raw amino-acid sequence, 325 residues long: Cytochrome c biogenesis protein CcsA (325 aa).

Helical transmembrane passes span 14-34 (TFAI…FPNL), 36-56 (GLPA…AALL), 68-88 (ISNL…IHLL), 97-117 (LVGA…AFTL), 142-162 (VMMV…AFLV), 233-253 (VIGL…VWAN), 260-280 (WSWD…AAYL), and 294-314 (AILA…VNLL).

This sequence belongs to the CcmF/CycK/Ccl1/NrfE/CcsA family. May interact with ccs1.

The protein resides in the cellular thylakoid membrane. Functionally, required during biogenesis of c-type cytochromes (cytochrome c6 and cytochrome f) at the step of heme attachment. This Synechococcus sp. (strain ATCC 27144 / PCC 6301 / SAUG 1402/1) (Anacystis nidulans) protein is Cytochrome c biogenesis protein CcsA.